Here is a 151-residue protein sequence, read N- to C-terminus: MKIILRKDVAALGDAGDVVAVKNGYANNYLIPQGMAIRATEGTLKALETEKKQQAKKIEQQRKNARDLAQKIEQMTLKVYAKAGESGKLFGTVTSADIAEALSAQGVEIDRRKITLEAPVKLLGKYEADAKLFMDVTVKVNFEVEAESSAS.

The protein belongs to the bacterial ribosomal protein bL9 family.

In terms of biological role, binds to the 23S rRNA. This is Large ribosomal subunit protein bL9 from Chlorobium limicola (strain DSM 245 / NBRC 103803 / 6330).